The following is a 402-amino-acid chain: uncharacterized protein (402 aa).

9 helical membrane-spanning segments follow: residues isoleucine 13 to alanine 33, phenylalanine 68 to valine 88, leucine 108 to leucine 128, leucine 149 to phenylalanine 169, leucine 223 to alanine 243, leucine 261 to lysine 281, isoleucine 283 to leucine 303, tyrosine 327 to glycine 347, and alanine 353 to leucine 373.

The protein resides in the cell membrane. Involved in transport. This is an uncharacterized protein from Bacillus subtilis (strain 168).